The primary structure comprises 286 residues: Shikimate dehydrogenase (NADP(+)) (286 aa).

Shikimate-binding positions include 19–21 (SLS) and Thr-66. Lys-70 functions as the Proton acceptor in the catalytic mechanism. Shikimate-binding residues include Asn-91 and Asp-107. NADP(+) contacts are provided by residues 129-133 (GSGGA) and Leu-229. Residue Tyr-231 coordinates shikimate. Gly-252 is an NADP(+) binding site.

Belongs to the shikimate dehydrogenase family. In terms of assembly, homodimer.

The enzyme catalyses shikimate + NADP(+) = 3-dehydroshikimate + NADPH + H(+). It functions in the pathway metabolic intermediate biosynthesis; chorismate biosynthesis; chorismate from D-erythrose 4-phosphate and phosphoenolpyruvate: step 4/7. Its function is as follows. Involved in the biosynthesis of the chorismate, which leads to the biosynthesis of aromatic amino acids. Catalyzes the reversible NADPH linked reduction of 3-dehydroshikimate (DHSA) to yield shikimate (SA). This Prochlorococcus marinus (strain AS9601) protein is Shikimate dehydrogenase (NADP(+)).